A 95-amino-acid chain; its full sequence is Large ribosomal subunit protein bL27 (95 aa).

A propeptide spanning residues 1–8 is cleaved from the precursor; that stretch reads MEMNLQFF. Residues 1–34 form a disordered region; the sequence is MEMNLQFFSHHKGGGSTSNGRDSAGRRLGTKRAD.

This sequence belongs to the bacterial ribosomal protein bL27 family. Post-translationally, the N-terminus is cleaved by ribosomal processing cysteine protease Prp.

This is Large ribosomal subunit protein bL27 from Pediococcus pentosaceus (strain ATCC 25745 / CCUG 21536 / LMG 10740 / 183-1w).